A 206-amino-acid chain; its full sequence is Bacterial microcompartment protein trimer-3 (206 aa).

BMC circularly permuted domains lie at 2–104 (ELRA…RLAP) and 105–206 (RVVS…DNRG). Positions 67–68 (ER) match the Pore gating residues motif.

Belongs to the EutL/PduB family. As to quaternary structure, homotrimerizes to form a pseudohexamer. These stack, with the concave faces together, with the concave faces together, in purified bacterial microcompartments (BMC).

The protein resides in the bacterial microcompartment. A minor component of the bacterial microcompartment (BMC) shell. Expression of 5 proteins in E.coli (BMC-H (Hoch_5815), BMC-P (Hoch_5814), and 3 BMC-T (Hoch_5812, Hoch_5816, Hoch_3341)) forms 40 nm artificial BMCs with a molecular mass of 6.5 MDa. One of 2 stacked pseudohexamers in the BMC. There are 20 BMC-T pseudohexamers per BMC, composed of mixed BMC-T1, BMC-T2 and BMC-T3. The shell facets are 20-30 Angstroms thick, with 1 of the stacked BMC-T trimers protruding to the exterior. The stacked trimers may serve as conduits to allow metabolite flux across the protein shell, gated by Arg-68 which contacts Glu-67 in an adjacent subunit; they are flexible enough to play a role in accommodating variations in shell assembly. The sequence is that of Bacterial microcompartment protein trimer-3 from Haliangium ochraceum (strain DSM 14365 / JCM 11303 / SMP-2).